The chain runs to 189 residues: Recombination protein RecR (189 aa).

The C4-type zinc finger occupies 48–63 (CQTCFHLSAEPTCEIC). The region spanning 71–165 (GMLCVVADSR…EVSRIAYGLP (95 aa)) is the Toprim domain.

Belongs to the RecR family.

May play a role in DNA repair. It seems to be involved in an RecBC-independent recombinational process of DNA repair. It may act with RecF and RecO. The sequence is that of Recombination protein RecR from Synechococcus sp. (strain CC9311).